Consider the following 1505-residue polypeptide: Probable serine/threonine-protein kinase DDB_G0280133 (1505 aa).

3 consecutive PAS domains span residues 2–72 (NTHN…FETG), 108–178 (RMFI…YHGG), and 215–284 (DMFK…TDSH). Disordered regions lie at residues 282–348 (DSHD…FNHS) and 398–533 (RVYG…ESSY). Composition is skewed to low complexity over residues 289–314 (QQQQ…TTST) and 328–344 (SSPP…TPTT). Composition is skewed to basic and acidic residues over residues 398-407 (RVYGKDKDKN) and 415-430 (ENKD…ESKE). Basic residues predominate over residues 431-443 (HRHSKEKKKRKKD). Positions 448–468 (NNNNNNNNNNNNNNEQTSDSS) are enriched in low complexity. Residues 479–489 (SKKKRSSKKKS) are compositionally biased toward basic residues. Over residues 515-532 (SSNSSSNSSHSNAPHESS) the composition is skewed to low complexity. Residues 542 to 805 (YTLGKTLGRG…IMNVLNHPWL (264 aa)) form the Protein kinase domain. ATP contacts are provided by residues 548–556 (LGRGNYGVV) and lysine 571. The active-site Proton acceptor is the aspartate 684. Low complexity predominate over residues 855–960 (NILNNNNNNN…NNTNSIINNN (106 aa)). Disordered stretches follow at residues 855-1048 (NILN…SHQQ), 1072-1091 (QPNQ…QLQQ), and 1181-1358 (QQQQ…DEEN). Residues 903–939 (NNNNNINNNINNNNNVNNNVNNNKNNNNNNNNNSNNN) are a coiled coil. Residues 961–974 (LYNQSLSPQNNNIY) are compositionally biased toward polar residues. 2 stretches are compositionally biased toward low complexity: residues 975 to 1013 (QHSP…QQQH) and 1022 to 1048 (QQHQ…SHQQ). Positions 1072 to 1082 (QPNQQVSFDTN) are enriched in polar residues. A coiled-coil region spans residues 1125 to 1189 (IQQIQQLQQQ…QQQQQQQQND (65 aa)). The segment covering 1202 to 1271 (SKRDNSYNKR…NSRDNNRYNN (70 aa)) has biased composition (basic and acidic residues). Residues 1272 to 1282 (RDNNNNNNSNN) are compositionally biased toward low complexity. Composition is skewed to basic and acidic residues over residues 1283–1301 (NRER…DYGK) and 1313–1326 (NKDK…KPDF). Residues 1331–1347 (SLKNDSSSNYGTISSGR) show a composition bias toward polar residues. Residues 1399–1463 (FLFGRNRDIA…NGTFLKGEKI (65 aa)) enclose the FHA domain.

The protein belongs to the protein kinase superfamily. CAMK Ser/Thr protein kinase family. SNF1 subfamily.

The enzyme catalyses L-seryl-[protein] + ATP = O-phospho-L-seryl-[protein] + ADP + H(+). The catalysed reaction is L-threonyl-[protein] + ATP = O-phospho-L-threonyl-[protein] + ADP + H(+). The chain is Probable serine/threonine-protein kinase DDB_G0280133 from Dictyostelium discoideum (Social amoeba).